Reading from the N-terminus, the 368-residue chain is MKNQMMKHNPMGKMANSLIQLACPKNISALWSFGSLLGLCLITQILTGIFLAMFYIPNIYQAFDSAIYISRDVNFGWLIRSIHANSASMFFICIYTHTGRGIYYSSHQMKETWMVGVTLLLITILTAFLGYVLPWGQMSFWAATVITNLLSAIPYLGSTIVNWIWGGFSVSNATLTRFYALHFLFPFLISALSLMHIIFLHQSGSSNPLGLNSNNETMKFHIYFSAKDLIGVILLWIMLGSVVLLKPNLLIDPENFIPANPLVTPTHIQPEWYFLPMYAILRSIPNKLGGVLALIMSIAILYFLPMMNKPITKSASMNPKNKIAFWLLVTNFIVLMWIGSKPVESPFEEIGQIMTVTYFSIYMIMSKN.

The next 4 helical transmembrane spans lie at 33-53 (FGSL…FLAM), 77-99 (WLIR…THTG), 112-132 (TWMV…LGYV), and 178-198 (FYAL…MHII). His-83 and His-97 together coordinate heme b. The heme b site is built by His-182 and His-196. His-201 lines the a ubiquinone pocket. 4 consecutive transmembrane segments (helical) span residues 224–244 (FSAK…SVVL), 288–308 (LGGV…PMMN), 323–343 (IAFW…SKPV), and 345–365 (SPFE…YMIM).

This sequence belongs to the cytochrome b family. In terms of assembly, the main subunits of complex b-c1 are: cytochrome b, cytochrome c1 and the Rieske protein. It depends on heme b as a cofactor.

The protein localises to the mitochondrion inner membrane. Functionally, component of the ubiquinol-cytochrome c reductase complex (complex III or cytochrome b-c1 complex) that is part of the mitochondrial respiratory chain. The b-c1 complex mediates electron transfer from ubiquinol to cytochrome c. Contributes to the generation of a proton gradient across the mitochondrial membrane that is then used for ATP synthesis. This is Cytochrome b (mt:Cyt-b) from Bugula neritina (Brown bryozoan).